The following is a 229-amino-acid chain: Imidazoleglycerol-phosphate dehydratase (229 aa).

It belongs to the imidazoleglycerol-phosphate dehydratase family.

It carries out the reaction D-erythro-1-(imidazol-4-yl)glycerol 3-phosphate = 3-(imidazol-4-yl)-2-oxopropyl phosphate + H2O. The protein operates within amino-acid biosynthesis; L-histidine biosynthesis; L-histidine from 5-phospho-alpha-D-ribose 1-diphosphate: step 6/9. This Neurospora crassa (strain ATCC 24698 / 74-OR23-1A / CBS 708.71 / DSM 1257 / FGSC 987) protein is Imidazoleglycerol-phosphate dehydratase.